A 400-amino-acid polypeptide reads, in one-letter code: Canavanine gamma-lyase (400 aa).

At Lys213 the chain carries N6-(pyridoxal phosphate)lysine.

The protein belongs to the trans-sulfuration enzymes family. Pyridoxal 5'-phosphate is required as a cofactor.

The enzyme catalyses L-canavanine + H2O = N-hydroxyguanidine + L-homoserine. Its function is as follows. Lyase involved in the degradation of canavanine, the delta-oxa-analog of arginine, allowing growth on canavanine as sole nitrogen and carbon source. Catalyzes the elimination of hydroxyguanidine from canavanine with a subsequent water addition to yield homoserine. Is highly specific for canavanine and cannot use methionine, cystathionine or arginine. This chain is Canavanine gamma-lyase, found in Pseudomonas canavaninivorans.